A 208-amino-acid chain; its full sequence is MEPSTRAVFDLGRVRDAVAPVLASHGVTLVDLEWITERAGWTLRLTIERENADDAGGGVTLEDCADVSRDVSSVLDVEDLIPNHYNLEVSSPGLDRRLRTAAEFARFLGRTAKVKLARPAPDGQRLLRGELLEAPEGQVAVLVDGKRIAVPFADVAEARLVFELTAQPKKGQRQGKEPAKESGQKKQLAEAAPRSGSKRSERGSEKRK.

Positions 165–208 (TAQPKKGQRQGKEPAKESGQKKQLAEAAPRSGSKRSERGSEKRK) are disordered. 2 stretches are compositionally biased toward basic and acidic residues: residues 174-188 (QGKE…KKQL) and 198-208 (KRSERGSEKRK).

This sequence belongs to the RimP family.

Its subcellular location is the cytoplasm. In terms of biological role, required for maturation of 30S ribosomal subunits. In Sorangium cellulosum (strain So ce56) (Polyangium cellulosum (strain So ce56)), this protein is Ribosome maturation factor RimP.